A 247-amino-acid chain; its full sequence is 14-3-3 protein zeta (247 aa).

It belongs to the 14-3-3 family. As to quaternary structure, homodimer.

Its subcellular location is the cytoplasm. Functionally, adapter protein implicated in the regulation of a large spectrum of both general and specialized signaling pathways. Binds to a large number of partners, usually by recognition of a phosphoserine or phosphothreonine motif. Binding generally results in the modulation of the activity of the binding partner. The chain is 14-3-3 protein zeta (14-3-3zeta) from Bombyx mori (Silk moth).